Reading from the N-terminus, the 1149-residue chain is DNA-directed RNA polymerase III subunit RPC2 (1149 aa).

Residues cysteine 1095, cysteine 1098, cysteine 1107, and cysteine 1110 each contribute to the Zn(2+) site. The segment at 1095–1110 adopts a C4-type zinc-finger fold; the sequence is CDKCGLMGYSGWCTTC.

It belongs to the RNA polymerase beta chain family. In terms of assembly, component of the RNA polymerase III (Pol III) complex consisting of 17 subunits.

The protein localises to the nucleus. The catalysed reaction is RNA(n) + a ribonucleoside 5'-triphosphate = RNA(n+1) + diphosphate. In terms of biological role, DNA-dependent RNA polymerase catalyzes the transcription of DNA into RNA using the four ribonucleoside triphosphates as substrates. Second largest core component of RNA polymerase III which synthesizes small RNAs, such as 5S rRNA and tRNAs. Proposed to contribute to the polymerase catalytic activity and forms the polymerase active center together with the largest subunit. Pol III is composed of mobile elements and RPC2 is part of the core element with the central large cleft and probably a clamp element that moves to open and close the cleft. The sequence is that of DNA-directed RNA polymerase III subunit RPC2 (RET1) from Saccharomyces cerevisiae (strain ATCC 204508 / S288c) (Baker's yeast).